The primary structure comprises 601 residues: Glutathione-regulated potassium-efflux system protein KefB (601 aa).

The next 13 helical transmembrane spans lie at 5-25 (DLLL…PLAA), 29-49 (IGAV…GLGF), 55-75 (EILH…GLEL), 87-107 (IFGV…GLLM), 115-135 (AAVI…LQLM), 152-172 (VLLF…LLAG), 177-197 (HFDW…LIGG), 207-227 (FIAA…LVLG), 230-250 (LFMD…GILL), 261-281 (IAID…VGMA), 284-304 (LGVL…LVAV), 326-346 (FAGV…TAAS), and 356-376 (ALLL…MKLI). One can recognise an RCK N-terminal domain in the interval 400–518 (KPQVIVVGFG…QAGVTNFSRE (119 aa)).

The protein belongs to the monovalent cation:proton antiporter 2 (CPA2) transporter (TC 2.A.37) family. KefB subfamily. As to quaternary structure, interacts with the regulatory subunit KefG.

It localises to the cell inner membrane. In terms of biological role, pore-forming subunit of a potassium efflux system that confers protection against electrophiles. Catalyzes K(+)/H(+) antiport. This Enterobacter sp. (strain 638) protein is Glutathione-regulated potassium-efflux system protein KefB.